The primary structure comprises 350 residues: tRNA uridine(34) hydroxylase (350 aa).

The 95-residue stretch at 146-240 (DDPDALFIDM…YARKARDQGL (95 aa)) folds into the Rhodanese domain. Cys200 acts as the Cysteine persulfide intermediate in catalysis.

This sequence belongs to the TrhO family.

It catalyses the reaction uridine(34) in tRNA + AH2 + O2 = 5-hydroxyuridine(34) in tRNA + A + H2O. Functionally, catalyzes oxygen-dependent 5-hydroxyuridine (ho5U) modification at position 34 in tRNAs, the first step in 5-carboxymethoxyuridine (cmo5U) biosynthesis. May be part of an alternate pathway, which is able to bypass cmo5U biogenesis in a subset of tRNAs under aerobic conditions. This is tRNA uridine(34) hydroxylase from Escherichia coli O6:K15:H31 (strain 536 / UPEC).